Reading from the N-terminus, the 54-residue chain is uncharacterized protein (54 aa).

The first 21 residues, methionine 1–alanine 21, serve as a signal peptide directing secretion. Residues glycine 22–threonine 29 are Extracellular-facing. A helical membrane pass occupies residues isoleucine 30–isoleucine 50. The Cytoplasmic segment spans residues serine 51–lysine 54.

The protein resides in the membrane. This is an uncharacterized protein from Dictyostelium discoideum (Social amoeba).